A 475-amino-acid chain; its full sequence is tRNA-2-methylthio-N(6)-dimethylallyladenosine synthase (475 aa).

Residues 1–21 are disordered; the sequence is MTTAPTSPALPASSDTAPTGP. Positions 24 to 145 constitute an MTTase N-terminal domain; sequence RGLHVITWGC…LPEMVARAAR (122 aa). 6 residues coordinate [4Fe-4S] cluster: C33, C69, C108, C186, C190, and C193. In terms of domain architecture, Radical SAM core spans 172 to 404; that stretch reads TQGNLTAFLT…QALLREQQDA (233 aa). Residues 407–469 form the TRAM domain; the sequence is ADMVGTVQEI…TNSLGGTLIR (63 aa).

The protein belongs to the methylthiotransferase family. MiaB subfamily. In terms of assembly, monomer. It depends on [4Fe-4S] cluster as a cofactor.

The protein resides in the cytoplasm. The catalysed reaction is N(6)-dimethylallyladenosine(37) in tRNA + (sulfur carrier)-SH + AH2 + 2 S-adenosyl-L-methionine = 2-methylsulfanyl-N(6)-dimethylallyladenosine(37) in tRNA + (sulfur carrier)-H + 5'-deoxyadenosine + L-methionine + A + S-adenosyl-L-homocysteine + 2 H(+). In terms of biological role, catalyzes the methylthiolation of N6-(dimethylallyl)adenosine (i(6)A), leading to the formation of 2-methylthio-N6-(dimethylallyl)adenosine (ms(2)i(6)A) at position 37 in tRNAs that read codons beginning with uridine. The chain is tRNA-2-methylthio-N(6)-dimethylallyladenosine synthase from Gluconobacter oxydans (strain 621H) (Gluconobacter suboxydans).